A 264-amino-acid chain; its full sequence is Phosphonoacetaldehyde hydrolase (264 aa).

Asp9 acts as the Nucleophile in catalysis. Mg(2+)-binding residues include Asp9 and Ala11. The Schiff-base intermediate with substrate role is filled by Lys50. Asp183 lines the Mg(2+) pocket.

It belongs to the HAD-like hydrolase superfamily. PhnX family. As to quaternary structure, homodimer. It depends on Mg(2+) as a cofactor.

The enzyme catalyses phosphonoacetaldehyde + H2O = acetaldehyde + phosphate + H(+). Functionally, involved in phosphonate degradation. The chain is Phosphonoacetaldehyde hydrolase (phnX) from Bacillus cereus.